Consider the following 279-residue polypeptide: Glutamate racemase (279 aa).

Residues D13–S14 and Y45–G46 contribute to the substrate site. C76 acts as the Proton donor/acceptor in catalysis. Position 77-78 (N77–T78) interacts with substrate. The active-site Proton donor/acceptor is C185. T186 to H187 is a substrate binding site.

It belongs to the aspartate/glutamate racemases family.

The enzyme catalyses L-glutamate = D-glutamate. Its pathway is cell wall biogenesis; peptidoglycan biosynthesis. Its function is as follows. Provides the (R)-glutamate required for cell wall biosynthesis. The chain is Glutamate racemase from Synechocystis sp. (strain ATCC 27184 / PCC 6803 / Kazusa).